We begin with the raw amino-acid sequence, 161 residues long: MSGMYPQPLMMMPQQQRRPRKPRTKSAPKPPTTSKMSEKTKKEVTKSTMSTEKQIPMPTIPAASKGSLKDLDVRNNLNQQELNGIYYDTVNNLNACHGRMIFQPTGGSLTEGTLTVTIKLRVKSDQCLKMCSAFHKRNTNLETPLSAVDISKESEKSLGKD.

The segment covering 1 to 16 (MSGMYPQPLMMMPQQQ) has biased composition (low complexity). Residues 1 to 52 (MSGMYPQPLMMMPQQQRRPRKPRTKSAPKPPTTSKMSEKTKKEVTKSTMSTE) form a disordered region. Residues 17–26 (RRPRKPRTKS) are compositionally biased toward basic residues. Basic and acidic residues predominate over residues 36 to 45 (MSEKTKKEVT).

The protein belongs to the torovirinae nucleoprotein family.

The protein localises to the virion. Major structural component of virions that associates with genomic RNA. This is Nucleoprotein (N) from Blicca bjoerkna (white bream).